A 115-amino-acid polypeptide reads, in one-letter code: Large ribosomal subunit protein bL19 (115 aa).

Belongs to the bacterial ribosomal protein bL19 family.

Its function is as follows. This protein is located at the 30S-50S ribosomal subunit interface and may play a role in the structure and function of the aminoacyl-tRNA binding site. The protein is Large ribosomal subunit protein bL19 of Leifsonia xyli subsp. xyli (strain CTCB07).